The sequence spans 619 residues: Lateral signaling target protein 2 homolog (619 aa).

The FYVE-type zinc-finger motif lies at 501-561 (DSDCEQCTAC…VCNLCFLYKI (61 aa)). C507, C510, C523, C526, C531, C534, C553, and C556 together coordinate Zn(2+). Residues 598-619 (HERSQDGSQSNESPTATTATTI) form a disordered region. A compositionally biased stretch (polar residues) spans 603 to 619 (DGSQSNESPTATTATTI).

It belongs to the lst-2 family.

Its function is as follows. Negative regulator of epidermal growth factor receptor (EGFR) signaling. In Brugia malayi (Filarial nematode worm), this protein is Lateral signaling target protein 2 homolog.